The sequence spans 72 residues: Large ribosomal subunit protein bL31 (72 aa).

Positions 16, 18, 38, and 41 each coordinate Zn(2+).

It belongs to the bacterial ribosomal protein bL31 family. Type A subfamily. Part of the 50S ribosomal subunit. It depends on Zn(2+) as a cofactor.

Binds the 23S rRNA. The chain is Large ribosomal subunit protein bL31 from Aromatoleum aromaticum (strain DSM 19018 / LMG 30748 / EbN1) (Azoarcus sp. (strain EbN1)).